Consider the following 461-residue polypeptide: MDYSYDEDLDELCPVCGDKVSGYHYGLLTCESCKGFFKRTVQNNKHYTCTESQSCKIDKTQRKRCPFCRFQKCLTVGMRLEAVRADRMRGGRNKFGPMYKRDRALKQQKKAQIRANGFKLETGPPMGVAPPPPPPPDYMLPPGLHAPEPKGLAAGPPTGPLGDFGAPTLPMAVPSAHGPLAGYLYPAFPGRAIKSEYPEPYASPPQPGPPYGYPEPFSGGPGVPELIVQLLQLEPDEDQVRARIVGCLQEPAKGRPDQPAPFSLLCRMADQTFISIVDWARRCMVFKELEVADQMTLLQNCWSELLVFDHIYRQIQHGKEGSILLVTGQEVELTTVAAQAGSLLHGLVLRAQELVLQLHALQLDRQEFVCLKFLILFSLDVKFLNNHSLVKDAQEKANAALLDYTLCHYPHCGDKFQQLLLCLVEVRALSMQAKEYLYHKHLGNEMPRNNLLIEMLQAKQT.

The segment at residues 10-85 is a DNA-binding region (nuclear receptor); the sequence is DELCPVCGDK…VGMRLEAVRA (76 aa). The NR C4-type zinc-finger motif lies at 13-33; that stretch reads CPVCGDKVSGYHYGLLTCESC. N6-acetyllysine occurs at positions 34, 38, and 72. The NR C4-type zinc-finger motif lies at 49 to 73; the sequence is CTESQSCKIDKTQRKRCPFCRFQKC. A Glycyl lysine isopeptide (Lys-Gly) (interchain with G-Cter in SUMO) cross-link involves residue K119. The disordered stretch occupies residues 119–150; the sequence is KLETGPPMGVAPPPPPPPDYMLPPGLHAPEPK. Residues 127 to 139 are compositionally biased toward pro residues; that stretch reads GVAPPPPPPPDYM. A Glycyl lysine isopeptide (Lys-Gly) (interchain with G-Cter in SUMO) cross-link involves residue K194. S203 is modified (phosphoserine; by CDK7). Positions 222–459 constitute an NR LBD domain; that stretch reads GVPELIVQLL…NLLIEMLQAK (238 aa). The segment at 230 to 461 is important for dimerization; sequence LLQLEPDEDQ…LIEMLQAKQT (232 aa). The a 1,2-diacyl-sn-glycero-3-phosphocholine site is built by G341, Y436, and K440.

It belongs to the nuclear hormone receptor family. NR5 subfamily. As to quaternary structure, binds DNA as a monomer. Part of a complex consisting of SFPQ, NONO and NR5A1. Interacts with NR0B2, NCOA2 and PPARGC1A. Interacts with DGKQ and CDK7. Binds to and activated by HIPK3. In terms of processing, acetylation stimulates the transcriptional activity. Sumoylation reduces CDK7-mediated phosphorylation on Ser-203. Post-translationally, phosphorylated on Ser-203 by CDK7. This phosphorylation promotes transcriptional activity.

The protein localises to the nucleus. In terms of biological role, transcriptional activator. Seems to be essential for sexual differentiation and formation of the primary steroidogenic tissues. Binds to the Ad4 site found in the promoter region of steroidogenic P450 genes such as CYP11A, CYP11B and CYP21B. Also regulates the AMH/Muellerian inhibiting substance gene as well as the AHCH and STAR genes. 5'-YCAAGGYC-3' and 5'-RRAGGTCA-3' are the consensus sequences for the recognition by NR5A1. The SFPQ-NONO-NR5A1 complex binds to the CYP17 promoter and regulates basal and cAMP-dependent transcriptional activity. Binds phosphatidylcholine and phospholipids with a phosphatidylinositol (PI) headgroup, in particular PI(3,4)P2 and PI(3,4,5)P3. Activated by the phosphorylation of NR5A1 by HIPK3 leading to increased steroidogenic gene expression upon cAMP signaling pathway stimulation. The polypeptide is Steroidogenic factor 1 (NR5A1) (Sus scrofa (Pig)).